We begin with the raw amino-acid sequence, 274 residues long: Large ribosomal subunit protein uL2 (274 aa).

Residues 223 to 258 form a disordered region; it reads VAMNPVDHPHGGGEGRTSGGRHPVTPWGIPTKGYKT.

This sequence belongs to the universal ribosomal protein uL2 family. In terms of assembly, part of the 50S ribosomal subunit. Forms a bridge to the 30S subunit in the 70S ribosome.

Its function is as follows. One of the primary rRNA binding proteins. Required for association of the 30S and 50S subunits to form the 70S ribosome, for tRNA binding and peptide bond formation. It has been suggested to have peptidyltransferase activity; this is somewhat controversial. Makes several contacts with the 16S rRNA in the 70S ribosome. This chain is Large ribosomal subunit protein uL2, found in Geotalea daltonii (strain DSM 22248 / JCM 15807 / FRC-32) (Geobacter daltonii).